Consider the following 464-residue polypeptide: ATP synthase subunit beta (464 aa).

ATP is bound at residue 150–157; it reads GGAGVGKT.

This sequence belongs to the ATPase alpha/beta chains family. As to quaternary structure, F-type ATPases have 2 components, CF(1) - the catalytic core - and CF(0) - the membrane proton channel. CF(1) has five subunits: alpha(3), beta(3), gamma(1), delta(1), epsilon(1). CF(0) has three main subunits: a(1), b(2) and c(9-12). The alpha and beta chains form an alternating ring which encloses part of the gamma chain. CF(1) is attached to CF(0) by a central stalk formed by the gamma and epsilon chains, while a peripheral stalk is formed by the delta and b chains.

Its subcellular location is the cell membrane. It carries out the reaction ATP + H2O + 4 H(+)(in) = ADP + phosphate + 5 H(+)(out). Functionally, produces ATP from ADP in the presence of a proton gradient across the membrane. The catalytic sites are hosted primarily by the beta subunits. The protein is ATP synthase subunit beta of Dehalococcoides mccartyi (strain ATCC BAA-2100 / JCM 16839 / KCTC 5957 / BAV1).